The following is a 100-amino-acid chain: Integration host factor subunit alpha (100 aa).

Belongs to the bacterial histone-like protein family. Heterodimer of an alpha and a beta chain.

Functionally, this protein is one of the two subunits of integration host factor, a specific DNA-binding protein that functions in genetic recombination as well as in transcriptional and translational control. This Ruegeria pomeroyi (strain ATCC 700808 / DSM 15171 / DSS-3) (Silicibacter pomeroyi) protein is Integration host factor subunit alpha.